A 692-amino-acid chain; its full sequence is DNA repair protein RAD34 (692 aa).

Residues 1–38 (MAKRLLESSQNDQANRKNSKIEKKEVSFYEEEETDDSF) form a disordered region. Over residues 28–38 (FYEEEETDDSF) the composition is skewed to acidic residues.

Belongs to the XPC family.

It is found in the nucleus. Involved in nucleotide excision repair (NER) of damaged ribosomal DNA (rDNA). Required for the repair of the RNA polymerase I-transcribed strand of rDNA. In Saccharomyces cerevisiae (strain ATCC 204508 / S288c) (Baker's yeast), this protein is DNA repair protein RAD34 (RAD34).